Here is a 348-residue protein sequence, read N- to C-terminus: Adenosine deaminase (348 aa).

Zn(2+)-binding residues include His16 and His18. The substrate site is built by His18, Asp20, and Gly174. His201 serves as a coordination point for Zn(2+). Catalysis depends on Glu204, which acts as the Proton donor. Position 282 (Asp282) interacts with Zn(2+).

Belongs to the metallo-dependent hydrolases superfamily. Adenosine and AMP deaminases family. Adenosine deaminase subfamily. It depends on Zn(2+) as a cofactor.

It carries out the reaction adenosine + H2O + H(+) = inosine + NH4(+). The enzyme catalyses 2'-deoxyadenosine + H2O + H(+) = 2'-deoxyinosine + NH4(+). Its function is as follows. Catalyzes the hydrolytic deamination of adenosine and 2-deoxyadenosine. This chain is Adenosine deaminase, found in Clostridium kluyveri (strain ATCC 8527 / DSM 555 / NBRC 12016 / NCIMB 10680 / K1).